The following is a 472-amino-acid chain: Nuclear receptor subfamily 0 group B member 1 (472 aa).

Repeat copies occupy residues 1–67, 68–135, and 136–202. The interval 1–255 is 4 X 67 AA tandem repeats; sequence MAGEDHPWQG…RLITLKDPQV (255 aa). 3 short sequence motifs (LXXLL motif) span residues 13–17, 80–84, and 148–152; these read LYNLL, LYSML, and LYSLL. An NR LBD domain is found at 190 to 471; that stretch reads QSTQAMAFLY…DMMLEMLCAK (282 aa). A 4; truncated repeat occupies 203–255; the sequence is VCGEEQPQQISVASGTPVSADQTPATPQEQPRAPWWDASPGVQRLITLKDPQV. The segment covering 214 to 231 has biased composition (polar residues); sequence VASGTPVSADQTPATPQE. Disordered stretches follow at residues 214-238 and 324-343; these read VASG…APWW and TTRR…ATEQ. The AF-2 motif signature appears at 463-468; the sequence is MMLEML.

It belongs to the nuclear hormone receptor family. NR0 subfamily. In terms of assembly, homodimer. Interacts with NR5A1, NR5A2, NR0B2 and with COPS2. Interacts with ESRRB; represses ESRRB activity at the GATA6 promoter. Expressed in adult cerebral cortex, spinal cord, thymus, heart, lung, ovary, testis, adrenal gland, hypothalamus, spleen and kidney.

It localises to the nucleus. It is found in the cytoplasm. Functionally, nuclear receptor that lacks a DNA-binding domain and acts as a corepressor that inhibits the transcriptional activity of other nuclear receptors through heterodimeric interactions. Component of a cascade required for the development of the hypothalamic-pituitary-adrenal-gonadal axis. May also have a role in the development of the embryo and in the maintenance of embryonic stem cell pluripotency. The polypeptide is Nuclear receptor subfamily 0 group B member 1 (Nr0b1) (Mus musculus (Mouse)).